Reading from the N-terminus, the 254-residue chain is Myeloblastin (254 aa).

The first 27 residues, 1–27, serve as a signal peptide directing secretion; sequence MSGSYPSPKGIHPFLLLALVVGGAVQA. Positions 28–29 are excised as a propeptide; the sequence is SK. The 221-residue stretch at 30–250 folds into the Peptidase S1 domain; it reads IVGGHEARPH…YVDWIQNVLR (221 aa). A disulfide bridge connects residues cysteine 58 and cysteine 74. Residues histidine 73 and aspartate 120 each act as charge relay system in the active site. Asparagine 127 and asparagine 176 each carry an N-linked (GlcNAc...) asparagine glycan. 3 disulfides stabilise this stretch: cysteine 154–cysteine 211, cysteine 184–cysteine 190, and cysteine 201–cysteine 226. The active-site Charge relay system is serine 205. Positions 251–254 are excised as a propeptide; it reads GAEP.

Belongs to the peptidase S1 family. Elastase subfamily. May form dimers. Interacts with CD177; the interaction tethers PRTN3 to the cell surface; the interaction is direct. Interacts with SERPINB1. Interacts with ADGRG3.

It localises to the lysosome. The protein localises to the secreted. Its subcellular location is the cell membrane. It is found in the membrane raft. The enzyme catalyses Hydrolysis of proteins, including elastin, by preferential cleavage: -Ala-|-Xaa- &gt; -Val-|-Xaa-.. In terms of biological role, serine protease that degrades elastin, fibronectin, laminin, vitronectin, and collagen types I, III, and IV (in vitro). By cleaving and activating receptor F2RL1/PAR-2, enhances endothelial cell barrier function and thus vascular integrity during neutrophil transendothelial migration. May play a role in neutrophil transendothelial migration, probably when associated with CD177. Triggers inflammatory processes in neutrophils by interacting with ADGRG3 upstream of F2RL1/PAR2 activation. The protein is Myeloblastin (Prtn3) of Mus musculus (Mouse).